The chain runs to 334 residues: Coiled-coil domain-containing protein 89 (334 aa).

A coiled-coil region spans residues 75-318 (EAAQRFQSER…EAYKKHSGDL (244 aa)).

It belongs to the CCDC89 family. Interacts (via C-terminus) with hey1/bc8 (via Orange domain). As to expression, in adults, expressed at varying levels in different organs including the liver and brain, with highest expression in the testis.

It is found in the cytoplasm. It localises to the nucleus. The polypeptide is Coiled-coil domain-containing protein 89 (Xenopus laevis (African clawed frog)).